Here is a 23-residue protein sequence, read N- to C-terminus: Malate dehydrogenase (23 aa).

Asn-7 is a binding site for NAD(+). Arg-23 serves as a coordination point for substrate.

It belongs to the LDH/MDH superfamily. MDH type 1 family. In terms of assembly, homodimer.

It catalyses the reaction (S)-malate + NAD(+) = oxaloacetate + NADH + H(+). The sequence is that of Malate dehydrogenase from Pseudotsuga menziesii (Douglas-fir).